We begin with the raw amino-acid sequence, 438 residues long: Fibrinogen gamma chain (438 aa).

An N-terminal signal peptide occupies residues 1 to 25; that stretch reads MTRLPKQGLLLLQSLALLSSAFGNI. N-linked (GlcNAc...) asparagine glycosylation occurs at Asn-76. Residues 167–414 form the Fibrinogen C-terminal domain; that stretch reads QIQEFTGKDC…SVTMKIMPLN (248 aa). A disulfide bridge links Cys-176 with Cys-205. Residues Asp-341, Asp-343, and Gly-347 each contribute to the Ca(2+) site. Cys-349 and Cys-362 are disulfide-bonded.

Heterohexamer; disulfide linked. Contains 2 sets of 3 non-identical chains (alpha, beta and gamma). The 2 heterotrimers are in head to head conformation with the N-termini in a small central domain. Post-translationally, conversion of fibrinogen to fibrin is triggered by thrombin, which cleaves fibrinopeptides A and B from alpha and beta chains, and thus exposes the N-terminal polymerization sites responsible for the formation of the soft clot. The soft clot is converted into the hard clot by factor XIIIA which catalyzes the epsilon-(gamma-glutamyl)lysine cross-linking between gamma chains (stronger) and between alpha chains (weaker) of different monomers.

The protein resides in the secreted. Its function is as follows. Together with fibrinogen alpha (FGA) and fibrinogen beta (FGB), polymerizes to form an insoluble fibrin matrix. Has a major function in hemostasis as one of the primary components of blood clots. This Xenopus laevis (African clawed frog) protein is Fibrinogen gamma chain (fgg).